Consider the following 424-residue polypeptide: MNYEQVREADPAIAAALADERDRQEDTLAMIASENHVSEAVLQAQSSELTNKYAEGYPGERYYAGCGPADDVEELAIERAEELWGAEHINVQPHSGTQANMAVYLAMLEPGDRILSLELEHGGHLSHGHPANFTGQTYEVEQYEVDPETGYIDYDELHEQAEAFEPDIIVSGYSAYPREVEFERIQEAADAVDAYHLADIAHITGLVAAGVHQSPVGVADFVTGSTHKTIRAGRGGIVMCDEEYADDIDAAVFPGAQGGPLMHNVAGKAVGFKEALQPEFEQYAQQVIDNAEALGERLQEHGFSLVSGGTDNHLVLVDLRESHPDTSGTVAEEALEAAGIVLNKNTVPGETRSAFNPSGIRAGTPALTTRGFDEQACERVADIIANVIDNPDDEGTIDEAAAEVDALCEEYPLYQGESGITDFE.

Residues leucine 119 and 123 to 125 (GHL) each bind (6S)-5,6,7,8-tetrahydrofolate. Lysine 228 bears the N6-(pyridoxal phosphate)lysine mark. Residue 353–355 (SAF) coordinates (6S)-5,6,7,8-tetrahydrofolate.

Belongs to the SHMT family. Homodimer. Pyridoxal 5'-phosphate serves as cofactor.

Its subcellular location is the cytoplasm. The enzyme catalyses (6R)-5,10-methylene-5,6,7,8-tetrahydrofolate + glycine + H2O = (6S)-5,6,7,8-tetrahydrofolate + L-serine. It participates in one-carbon metabolism; tetrahydrofolate interconversion. Its pathway is amino-acid biosynthesis; glycine biosynthesis; glycine from L-serine: step 1/1. Functionally, catalyzes the reversible interconversion of serine and glycine with tetrahydrofolate (THF) serving as the one-carbon carrier. Also exhibits THF-independent aldolase activity toward beta-hydroxyamino acids, producing glycine and aldehydes, via a retro-aldol mechanism. This Natronomonas pharaonis (strain ATCC 35678 / DSM 2160 / CIP 103997 / JCM 8858 / NBRC 14720 / NCIMB 2260 / Gabara) (Halobacterium pharaonis) protein is Serine hydroxymethyltransferase.